A 113-amino-acid polypeptide reads, in one-letter code: Flagellar hook-basal body complex protein FliE (113 aa).

This sequence belongs to the FliE family.

The protein localises to the bacterial flagellum basal body. In Rhizobium etli (strain CIAT 652), this protein is Flagellar hook-basal body complex protein FliE.